We begin with the raw amino-acid sequence, 407 residues long: Inhibin beta B chain (407 aa).

The N-terminal stretch at 1–28 is a signal peptide; that stretch reads MDGLPGRALGAACLLLLAAGWLGPEAWG. The tract at residues 27–60 is disordered; it reads WGSPTPPPSPAAPPPPPPPGALGGSQDTCTSCGG. A propeptide spanning residues 29–292 is cleaved from the precursor; it reads SPTPPPSPAA…VDSRHRIRKR (264 aa). Positions 30–46 are enriched in pro residues; the sequence is PTPPPSPAAPPPPPPPG. Asn-93 carries an N-linked (GlcNAc...) asparagine glycan. 4 cysteine pairs are disulfide-bonded: Cys-296-Cys-304, Cys-303-Cys-372, Cys-332-Cys-404, and Cys-336-Cys-406.

The protein belongs to the TGF-beta family. In terms of assembly, dimeric, linked by one or more disulfide bonds. Inhibin B is a dimer of alpha and beta-B. Activin B is a homodimer of beta-B. Activin AB is a dimer of beta-A and beta-B. Interacts with FST and FSTL3.

The protein resides in the secreted. Inhibins and activins inhibit and activate, respectively, the secretion of follitropin by the pituitary gland. Inhibins/activins are involved in regulating a number of diverse functions such as hypothalamic and pituitary hormone secretion, gonadal hormone secretion, germ cell development and maturation, erythroid differentiation, insulin secretion, nerve cell survival, embryonic axial development or bone growth, depending on their subunit composition. Inhibins appear to oppose the functions of activins. Its function is as follows. Activin B is a dimer of alpha and beta-B that plays a role in several essential biological processes including embryonic development, stem cell maintenance and differentiation, haematopoiesis, cell proliferation and wound healing. Signals through type I receptor ACVR1C, abundantly expressed in pancreatic beta cells, and type II receptors like ACVR2A. Upon ligand binding, these receptors phosphorylate intracellular signaling mediators SMAD2 and SMAD3, which form a complex with SMAD4, translocate to the nucleus, and regulate gene expression. Plays a crucial role in the induction of hepcidin by inflammation through activation of ACVR1C and subsequent phosphorylation of SMAD1/5/8. Regulates adipocyte lipid metabolism by decreasing non-esterified fatty acids and glycerol release and increases intracellular triglyceride content. Stimulates wound healing by promoting cell migration and hair follicle regeneration through the JNK and ERK signaling pathways downstream of RHOA. Functionally, inhibin B is a dimer of alpha and beta-B that plays a crucial role in the regulation of the reproductive system by inhibiting the secretion of follicle-stimulating hormone (FSH) from the anterior pituitary gland. Thereby, maintains reproductive homeostasis in both males and females. Acts as a more potent suppressor of FSH release than inhibin A. Functions as competitive receptor antagonist binding activin type II receptors with high affinity in the presence of the TGF-beta type III coreceptor/TGFBR3L. The chain is Inhibin beta B chain (INHBB) from Sus scrofa (Pig).